Reading from the N-terminus, the 957-residue chain is Calsyntenin-3 (957 aa).

A signal peptide spans Met-1–Cys-19. At Asn-20–Ala-848 the chain is on the extracellular side. Cadherin domains follow at residues Ile-29–Phe-145 and Val-146–Trp-246. N-linked (GlcNAc...) asparagine glycosylation is found at Asn-299, Asn-347, and Asn-508. A helical membrane pass occupies residues Ala-849–Val-869. The Cytoplasmic segment spans residues Arg-870–Tyr-957. The tract at residues Cys-919–Tyr-957 is disordered. Positions Gln-928–Ala-938 are enriched in acidic residues. Positions Ser-944–Tyr-957 are enriched in basic and acidic residues.

It belongs to the calsyntenin family. In terms of assembly, interacts (via cadherin domains) with both alpha and beta isoforms of neurexins (NRXN1, NRXN2 and NRXN3). Directly interacts with APBA2. Forms a tripartite complex with APBA2 and APP. Interacts with low affinity with KLC1. Interacts with SLC23A2/SVCT2. Post-translationally, proteolytically processed under normal cellular conditions. A primary zeta-cleavage generates a large extracellular (soluble) N-terminal domain (sAlc) and a short C-terminal transmembrane fragment (CTF1). A secondary cleavage catalyzed by gamma-secretase within the transmembrane domain releases the beta-Alc-beta chain in the extracellular milieu and produces an intracellular fragment (AlcICD). This processing is strongly suppressed in the tripartite complex formed with APBA2 and APP, which seems to prevent the association with gamma-secretase.

It is found in the postsynaptic cell membrane. Its subcellular location is the endoplasmic reticulum membrane. The protein resides in the golgi apparatus membrane. It localises to the cell projection. The protein localises to the dendrite. Functionally, postsynaptic adhesion molecule that binds to presynaptic neurexins to mediate both excitatory and inhibitory synapse formation. Promotes synapse development by acting as a cell adhesion molecule at the postsynaptic membrane, which associates with both neurexin-alpha and neurexin-beta proteins at the presynaptic membrane. Regulates the balance between excitatory and inhibitory synapses by inhibiting formation of excitatory parallel-fiber synapses and promoting formation of inhibitory synapses in the same neuron. May also be involved in ascorbate (vitamin C) uptake via its interaction with SLC23A2/SVCT2. Complex formation with APBA2 and APP, stabilizes APP metabolism and enhances APBA2-mediated suppression of beta-APP40 secretion, due to the retardation of intracellular APP maturation. This is Calsyntenin-3 (CLSTN3) from Bos taurus (Bovine).